A 513-amino-acid chain; its full sequence is uncharacterized protein (513 aa).

In terms of domain architecture, CYTH spans His-11–Thr-219. Residues Pro-228 to Lys-506 form the CHAD domain.

This is an uncharacterized protein from Mycobacterium tuberculosis (strain ATCC 25618 / H37Rv).